The primary structure comprises 466 residues: Uronate isomerase (466 aa).

It belongs to the metallo-dependent hydrolases superfamily. Uronate isomerase family.

The catalysed reaction is D-glucuronate = D-fructuronate. It carries out the reaction aldehydo-D-galacturonate = keto-D-tagaturonate. It participates in carbohydrate metabolism; pentose and glucuronate interconversion. This is Uronate isomerase from Caldanaerobacter subterraneus subsp. tengcongensis (strain DSM 15242 / JCM 11007 / NBRC 100824 / MB4) (Thermoanaerobacter tengcongensis).